The following is a 238-amino-acid chain: Probable transcriptional regulatory protein YeeN (238 aa).

This sequence belongs to the TACO1 family. YeeN subfamily.

The protein localises to the cytoplasm. This chain is Probable transcriptional regulatory protein YeeN, found in Salmonella choleraesuis (strain SC-B67).